A 581-amino-acid polypeptide reads, in one-letter code: 2-succinyl-5-enolpyruvyl-6-hydroxy-3-cyclohexene-1-carboxylate synthase (581 aa).

The protein belongs to the TPP enzyme family. MenD subfamily. As to quaternary structure, homodimer. The cofactor is Mg(2+). It depends on Mn(2+) as a cofactor. Requires thiamine diphosphate as cofactor.

The catalysed reaction is isochorismate + 2-oxoglutarate + H(+) = 5-enolpyruvoyl-6-hydroxy-2-succinyl-cyclohex-3-ene-1-carboxylate + CO2. It participates in quinol/quinone metabolism; 1,4-dihydroxy-2-naphthoate biosynthesis; 1,4-dihydroxy-2-naphthoate from chorismate: step 2/7. It functions in the pathway quinol/quinone metabolism; menaquinone biosynthesis. Functionally, catalyzes the thiamine diphosphate-dependent decarboxylation of 2-oxoglutarate and the subsequent addition of the resulting succinic semialdehyde-thiamine pyrophosphate anion to isochorismate to yield 2-succinyl-5-enolpyruvyl-6-hydroxy-3-cyclohexene-1-carboxylate (SEPHCHC). The polypeptide is 2-succinyl-5-enolpyruvyl-6-hydroxy-3-cyclohexene-1-carboxylate synthase (Psychromonas ingrahamii (strain DSM 17664 / CCUG 51855 / 37)).